We begin with the raw amino-acid sequence, 228 residues long: Indole-3-glycerol phosphate synthase (228 aa).

The protein belongs to the TrpC family.

The catalysed reaction is 1-(2-carboxyphenylamino)-1-deoxy-D-ribulose 5-phosphate + H(+) = (1S,2R)-1-C-(indol-3-yl)glycerol 3-phosphate + CO2 + H2O. It participates in amino-acid biosynthesis; L-tryptophan biosynthesis; L-tryptophan from chorismate: step 4/5. This Pyrococcus furiosus (strain ATCC 43587 / DSM 3638 / JCM 8422 / Vc1) protein is Indole-3-glycerol phosphate synthase.